Reading from the N-terminus, the 384-residue chain is BarH-like 2 homeobox protein (384 aa).

Disordered regions lie at residues 1 to 134 (MTAM…APRT), 154 to 235 (CAPY…ARTA), and 364 to 384 (PGGQPALNPLSNPIPGTPHPR). 2 stretches are compositionally biased toward low complexity: residues 101–110 (VPAQSLQPSP) and 119–134 (QSAAQQLGSAAAAPRT). A compositionally biased stretch (polar residues) spans 157-175 (YSTSVSSPHHTPKQESNAA). A compositionally biased stretch (basic and acidic residues) spans 177 to 217 (ESFRPKLEQEDGKTKLDKREDPQSDIKCHGTKEEGDREITS). The homeobox DNA-binding region spans 229–288 (PRKARTAFSDHQLNQLERSFERQKYLSVQDRMDLAAALNLTDTQVKTWYQNRRTKWKRQT).

This sequence belongs to the BAR homeobox family.

It localises to the nucleus. In terms of biological role, potential regulator of neural basic helix-loop-helix genes. It may down-regulate expression of ASCL1 and, within the thalamus, up-regulate NGN2, thereby regulating distinct patterns of neuronal differentiation. The polypeptide is BarH-like 2 homeobox protein (Barhl2) (Mus musculus (Mouse)).